The sequence spans 349 residues: Small ribosomal subunit biogenesis GTPase RsgA (349 aa).

Basic residues predominate over residues 1–11 (MSKKKLSKGQQ). Residues 1-29 (MSKKKLSKGQQRRVSANHQRRLKKTESKV) are disordered. The CP-type G domain maps to 102-272 (HSVLTRPDYY…VIDSPGVREF (171 aa)). Residues 158 to 161 (NKID) and 212 to 220 (GQSGVGKSS) each bind GTP. 4 residues coordinate Zn(2+): C296, C301, H303, and C309.

This sequence belongs to the TRAFAC class YlqF/YawG GTPase family. RsgA subfamily. As to quaternary structure, monomer. Associates with 30S ribosomal subunit, binds 16S rRNA. Zn(2+) serves as cofactor.

The protein resides in the cytoplasm. Its function is as follows. One of several proteins that assist in the late maturation steps of the functional core of the 30S ribosomal subunit. Helps release RbfA from mature subunits. May play a role in the assembly of ribosomal proteins into the subunit. Circularly permuted GTPase that catalyzes slow GTP hydrolysis, GTPase activity is stimulated by the 30S ribosomal subunit. The sequence is that of Small ribosomal subunit biogenesis GTPase RsgA from Pectobacterium carotovorum subsp. carotovorum (strain PC1).